The primary structure comprises 156 residues: UPF0178 protein Jann_2168 (156 aa).

Belongs to the UPF0178 family.

The protein is UPF0178 protein Jann_2168 of Jannaschia sp. (strain CCS1).